The sequence spans 714 residues: MMQESATETISNSSMNQNGMSTLSSQLDAGSRDGRSSGDTSSEVSTVELLHLQQQQALQAARQLLLQQQTSGLKSPKSSEKQRPLQVPVSVAMMTPQVITPQQMQQILQQQVLSPQQLQALLQQQQAVMLQQQQLQEFYKKQQEQLHLQLLQQQQQQQQQQQQQQQQQQQQQQQQQQQQQQQQQQQQQQQQHPGKQAKEQQQQQQQQQLAAQQLVFQQQLLQMQQLQQQQHLLSLQRQGLISIPPGQAALPVQSLPQAGLSPAEIQQLWKEVTGVHSMEDNGIKHGGLDLTTNNSSSTTSSTTSKASPPITHHSIVNGQSSVLNARRDSSSHEETGASHTLYGHGVCKWPGCESICEDFGQFLKHLNNEHALDDRSTAQCRVQMQVVQQLEIQLSKERERLQAMMTHLHMRPSEPKPSPKPLNLVSSVTMSKNMLETSPQSLPQTPTTPTAPVTPITQGPSVITPASVPNVGAIRRRHSDKYNIPMSSEIAPNYEFYKNADVRPPFTYATLIRQAIMESSDRQLTLNEIYSWFTRTFAYFRRNAATWKNAVRHNLSLHKCFVRVENVKGAVWTVDEVEYQKRRSQKITGSPTLVKNIPTSLGYGAALNASLQAALAESSLPLLSNPGLINNASSGLLQAVHEDLNGSLDHIDSNGNSSPGCSPQPHIHSIHVKEEPVIAEDEDCPMSLVTTANHSPELEDDREIEEEPLSEDLE.

Positions 1 to 28 (MMQESATETISNSSMNQNGMSTLSSQLD) are enriched in polar residues. 2 disordered regions span residues 1–45 (MMQE…SEVS) and 280–338 (DNGI…TGAS). The span at 291–304 (TTNNSSSTTSSTTS) shows a compositional bias: low complexity. Residues 314 to 323 (SIVNGQSSVL) show a composition bias toward polar residues. Over residues 325–336 (ARRDSSSHEETG) the composition is skewed to basic and acidic residues. The C2H2-type zinc-finger motif lies at 345–370 (GVCKWPGCESICEDFGQFLKHLNNEH). The tract at residues 387–408 (VQQLEIQLSKERERLQAMMTHL) is leucine-zipper. Residues 421 to 425 (PLNLV) form a CTBP1-binding region. A compositionally biased stretch (low complexity) spans 437–458 (TSPQSLPQTPTTPTAPVTPITQ). A disordered region spans residues 437–464 (TSPQSLPQTPTTPTAPVTPITQGPSVIT). Residues 503 to 593 (RPPFTYATLI…SQKITGSPTL (91 aa)) constitute a DNA-binding region (fork-head). Disordered regions lie at residues 648–667 (LDHIDSNGNSSPGCSPQPHI) and 677–714 (VIAEDEDCPMSLVTTANHSPELEDDREIEEEPLSEDLE). Positions 698-714 (LEDDREIEEEPLSEDLE) are enriched in acidic residues.

As to quaternary structure, forms homodimers and heterodimers with FOXP1 and FOXP4. Dimerization is required for DNA-binding. Interacts with CTBP1. Interacts with FOXP1. Interacts with TBR1. Interacts with ZMYM2. As to expression, highest expression in lung. Lower expression in spleen, skeletal muscle, brain, kidney and small intestine.

It is found in the nucleus. In terms of biological role, transcriptional repressor that may play a role in the specification and differentiation of lung epithelium. May also play a role in developing neural, gastrointestinal and cardiovascular tissues. Can act with CTBP1 to synergistically repress transcription but CTPBP1 is not essential. Plays a role in synapse formation by regulating SRPX2 levels. This Mus musculus (Mouse) protein is Forkhead box protein P2 (Foxp2).